Reading from the N-terminus, the 605-residue chain is UvrABC system protein C (605 aa).

The 79-residue stretch at 14 to 92 (QSCGVYKMVG…IKSLKPLYNI (79 aa)) folds into the GIY-YIG domain. Positions 202–237 (KEVKEQLLFTMRKCSSEENYELAAIYRDRVKFLEQI) constitute a UVR domain.

Belongs to the UvrC family. As to quaternary structure, interacts with UvrB in an incision complex.

It localises to the cytoplasm. Its function is as follows. The UvrABC repair system catalyzes the recognition and processing of DNA lesions. UvrC both incises the 5' and 3' sides of the lesion. The N-terminal half is responsible for the 3' incision and the C-terminal half is responsible for the 5' incision. The sequence is that of UvrABC system protein C from Wolbachia pipientis wMel.